Reading from the N-terminus, the 446-residue chain is Exodeoxyribonuclease 7 large subunit (446 aa).

It belongs to the XseA family. In terms of assembly, heterooligomer composed of large and small subunits.

It is found in the cytoplasm. It catalyses the reaction Exonucleolytic cleavage in either 5'- to 3'- or 3'- to 5'-direction to yield nucleoside 5'-phosphates.. Functionally, bidirectionally degrades single-stranded DNA into large acid-insoluble oligonucleotides, which are then degraded further into small acid-soluble oligonucleotides. The protein is Exodeoxyribonuclease 7 large subunit of Streptococcus gordonii (strain Challis / ATCC 35105 / BCRC 15272 / CH1 / DL1 / V288).